A 390-amino-acid chain; its full sequence is Homoserine O-succinyltransferase (390 aa).

The AB hydrolase-1 domain maps to 59-369; that stretch reads NAVLVCHALN…PHGHDAFLLD (311 aa). The active-site Nucleophile is the S165. R235 lines the substrate pocket. Active-site residues include D330 and H363. D364 is a substrate binding site.

The protein belongs to the AB hydrolase superfamily. MetX family. In terms of assembly, homodimer.

Its subcellular location is the cytoplasm. It catalyses the reaction L-homoserine + succinyl-CoA = O-succinyl-L-homoserine + CoA. It participates in amino-acid biosynthesis; L-methionine biosynthesis via de novo pathway; O-succinyl-L-homoserine from L-homoserine: step 1/1. Functionally, transfers a succinyl group from succinyl-CoA to L-homoserine, forming succinyl-L-homoserine. The sequence is that of Homoserine O-succinyltransferase from Cupriavidus pinatubonensis (strain JMP 134 / LMG 1197) (Cupriavidus necator (strain JMP 134)).